Consider the following 1104-residue polypeptide: Protein KIBRA (1104 aa).

2 WW domains span residues 6-39 and 53-86; these read LPLP…DPRD and DELP…DPRV. Positions 107-193 form a coiled coil; it reads LSAQKEIYQV…ELQFKERGFQ (87 aa). Ser-141 is modified (phosphoserine). Disordered stretches follow at residues 429 to 449 and 509 to 547; these read SMQS…RGSL and TQKA…SPPC. Residues 527-542 are compositionally biased toward low complexity; it reads TPRSMTSLSPRSSLSS. Ser-535 is subject to Phosphoserine. Residue Ser-542 is modified to Phosphoserine; by CDK1. Residues 659 to 782 enclose the C2 domain; the sequence is GATRVQIALK…RSGERSTRWY (124 aa). The tract at residues 822 to 949 is disordered; sequence LEKRQEGRSS…DSSTLSKKPP (128 aa). Residues 836–1104 form an interaction with histone H3 region; the sequence is EGSWTYEEEA…NIPALSADDV (269 aa). The segment covering 841-862 has biased composition (acidic residues); it reads YEEEASENEAVAEEEEEGEEDV. Ser-887, Ser-891, and Ser-919 each carry phosphoserine. Polar residues predominate over residues 916–930; that stretch reads IIRSKTFSPGPQSQY. Thr-921 is modified (phosphothreonine). Phosphoserine; by CDK1 is present on Ser-923. A Phosphoserine modification is found at Ser-939. Interaction with PRKCZ stretches follow at residues 945–988 and 948–967; these read SKKP…LDLQ and PPFV…RPSS. Ser-967 and Ser-970 each carry phosphoserine; by PKC/PRKCZ. Residues 994–1024 adopt a coiled-coil conformation; sequence HSQLTQEISVLKELKEHLEQAKNHGEKELPQ. The ADDV motif signature appears at 1102–1104; sequence DDV.

The protein belongs to the WWC family. KIBRA subfamily. Homodimer. Forms heterodimers with WWC2 and WWC3. Interacts with DDN. Interacts with DYNLL1 and histone H3. The interaction with DYNLL1 is mandatory for the recruitment and transactivation functions of ESR1 or DYNLL1 to the target chromatin and the interaction with histone H3 ensures proper regulatory interaction of WWC1-DYNLL1-ESR1 complexes with target chromatin. Interacts (via WW domains) with DDR1 (via PPxY motif) in a collagen-regulated manner. Interacts with PRKCZ (via the protein kinase domain). Forms a tripartite complex with DDR1 and PRKCZ, but predominantly in the absence of collagen. Interacts (via the ADDV motif) with PATJ (via PDZ domain 8). Interacts (via WW domains) with SYNPO (via PPxY motifs). Interacts with NF2 and SNX4. Interacts with CCDC141; retains AMPAR in the cytosol after internalization. Interacts with DLC1 and PRKCZ. Interacts (via WW domains) with LATS1 and LATS2. In terms of processing, phosphorylation at Ser-542 and Ser-923 by CDK1 in response to spindle damage stress regulates mitotic exit, these two sites are dephosphorylated by CDC14B. In terms of tissue distribution, mammary epithelium.

It localises to the cytoplasm. It is found in the perinuclear region. The protein resides in the nucleus. Its subcellular location is the cell projection. The protein localises to the ruffle membrane. It localises to the cytosol. In terms of biological role, regulator of the Hippo signaling pathway, also known as the Salvador-Warts-Hippo (SWH) pathway. Enhances phosphorylation of LATS1 and YAP1 and negatively regulates cell proliferation and organ growth due to a suppression of the transcriptional activity of YAP1, the major effector of the Hippo pathway. Along with NF2 can synergistically induce the phosphorylation of LATS1 and LATS2 and function in the regulation of Hippo signaling pathway. Acts as a transcriptional coactivator of ESR1 which plays an essential role in DYNLL1-mediated ESR1 transactivation. Modulates directional migration of podocytes. May be associated with memory performance. Regulates collagen-stimulated activation of the ERK/MAPK cascade. Plays an important role in regulating AMPA-selective glutamate receptors (AMPARs) trafficking. The protein is Protein KIBRA (Wwc1) of Mus musculus (Mouse).